Here is a 482-residue protein sequence, read N- to C-terminus: Transcription initiation factor IIE subunit alpha (482 aa).

The region spanning 9 to 99 is the HTH TFE/IIEalpha-type domain; sequence VKNLLKFVVR…KYPHAIDAIK (91 aa). The C4-type zinc-finger motif lies at 124-152; the sequence is CPICLTKYTQLEAVQLLNFDRTEFLCSLC. Residues 274–286 show a composition bias toward basic and acidic residues; sequence RELQERQAEEKRK. Disordered regions lie at residues 274-295 and 321-482; these read RELQ…EWHK and AMDS…FEDV. The segment covering 321-345 has biased composition (polar residues); that stretch reads AMDSINPDNEPAQETSYQNNRTLTE. The span at 374–401 shows a compositional bias: acidic residues; it reads EEEEEEEEEEDEEEEEEEEMEDVMDDND. The segment covering 419 to 432 has biased composition (polar residues); the sequence is TAGTAKTESNTSND. The span at 433–444 shows a compositional bias: basic and acidic residues; it reads VKQESINDKTED. Over residues 464-482 the composition is skewed to acidic residues; that stretch reads GDDDDDDDDDEMDIEFEDV.

It belongs to the TFIIE alpha subunit family. As to quaternary structure, TFIIE is a tetramer of two alpha (TFA1) and two beta (TFA2) subunits.

It is found in the nucleus. Functionally, recruits TFIIH to the initiation complex and stimulates the RNA polymerase II C-terminal domain kinase and DNA-dependent ATPase activities of TFIIH. Both TFIIH and TFIIE are required for promoter clearance by RNA polymerase. The chain is Transcription initiation factor IIE subunit alpha (TFA1) from Saccharomyces cerevisiae (strain ATCC 204508 / S288c) (Baker's yeast).